Reading from the N-terminus, the 294-residue chain is Acetyl-coenzyme A carboxylase carboxyl transferase subunit beta (294 aa).

The 266-residue stretch at 29–294 (LWEKCPECGQ…TQVVKLQTNA (266 aa)) folds into the CoA carboxyltransferase N-terminal domain. Zn(2+) is bound by residues C33, C36, C52, and C55. The C4-type zinc finger occupies 33–55 (CPECGQVVYRKDLIDNCSVCSNC).

Belongs to the AccD/PCCB family. In terms of assembly, acetyl-CoA carboxylase is a heterohexamer composed of biotin carboxyl carrier protein (AccB), biotin carboxylase (AccC) and two subunits each of ACCase subunit alpha (AccA) and ACCase subunit beta (AccD). Requires Zn(2+) as cofactor.

The protein resides in the cytoplasm. It carries out the reaction N(6)-carboxybiotinyl-L-lysyl-[protein] + acetyl-CoA = N(6)-biotinyl-L-lysyl-[protein] + malonyl-CoA. The protein operates within lipid metabolism; malonyl-CoA biosynthesis; malonyl-CoA from acetyl-CoA: step 1/1. Its function is as follows. Component of the acetyl coenzyme A carboxylase (ACC) complex. Biotin carboxylase (BC) catalyzes the carboxylation of biotin on its carrier protein (BCCP) and then the CO(2) group is transferred by the transcarboxylase to acetyl-CoA to form malonyl-CoA. The polypeptide is Acetyl-coenzyme A carboxylase carboxyl transferase subunit beta (Prochlorococcus marinus (strain NATL2A)).